The sequence spans 927 residues: DIS3-like exonuclease 2 (927 aa).

Basic residues predominate over residues 1–12 (MDLKPNIRRKEK). The segment at 1–168 (MDLKPNIRRK…DTNNATEMVS (168 aa)) is disordered. The segment covering 13-31 (RNLLKGEAALEKKGSIDRK) has biased composition (basic and acidic residues). Positions 97 to 106 (VKPKAKKKNS) are enriched in basic residues. Residues 107–152 (KEKISKSSKQDEHKTDVHKESVSKLSKNLESRNNRDENSAKREKNN) show a composition bias toward basic and acidic residues. Residues 153–168 (SHQVEADTNNATEMVS) are compositionally biased toward polar residues. Mg(2+) is bound by residues Asp-453 and Asp-462.

This sequence belongs to the RNR ribonuclease family. DIS3L2 subfamily. Mg(2+) serves as cofactor. It depends on Mn(2+) as a cofactor.

The protein localises to the cytoplasm. It is found in the P-body. Its function is as follows. 3'-5'-exoribonuclease that specifically recognizes RNAs polyuridylated at their 3' end and mediates their degradation. Component of an exosome-independent RNA degradation pathway that mediates degradation of cytoplasmic mRNAs that have been deadenylated and subsequently uridylated at their 3'. This is DIS3-like exonuclease 2 (dis32) from Schizosaccharomyces pombe (strain 972 / ATCC 24843) (Fission yeast).